We begin with the raw amino-acid sequence, 165 residues long: Growth arrest and DNA damage-inducible protein GADD45 alpha (165 aa).

Residue T2 is modified to Phosphothreonine.

Belongs to the GADD45 family. As to quaternary structure, interacts with AURKA, PCNA, GADD45GIP1 and MAPK14.

Its subcellular location is the nucleus. In terms of biological role, might affect PCNA interaction with some CDK (cell division protein kinase) complexes; stimulates DNA excision repair in vitro and inhibits entry of cells into S phase. In T-cells, functions as a regulator of p38 MAPKs by inhibiting p88 phosphorylation and activity. The chain is Growth arrest and DNA damage-inducible protein GADD45 alpha (Gadd45a) from Rattus norvegicus (Rat).